The following is a 199-amino-acid chain: Probable GTP-binding protein EngB (199 aa).

Residues aspartate 28 to leucine 199 enclose the EngB-type G domain. GTP contacts are provided by residues glycine 36–serine 43, glycine 63–leucine 67, aspartate 81–glycine 84, threonine 148–aspartate 151, and phenylalanine 180–serine 182. Mg(2+) is bound by residues serine 43 and threonine 65.

It belongs to the TRAFAC class TrmE-Era-EngA-EngB-Septin-like GTPase superfamily. EngB GTPase family. Mg(2+) serves as cofactor.

Its function is as follows. Necessary for normal cell division and for the maintenance of normal septation. The polypeptide is Probable GTP-binding protein EngB (Streptococcus equi subsp. zooepidemicus (strain H70)).